Reading from the N-terminus, the 156-residue chain is MIIGANTSKNFFDNLEEEQIQQCGIDLRVWKIFKIEGEGVIDFSNEKRKLPNYIEIFNSEKDEHIKLDRGVYIVKVADYIKIPENVAGFAYPRSSLLRMGATLYSAVHDPGYEGRPEYLMQVFNPITIYKYARIAQIVFVECRDVKGVYEGIYKGR.

This sequence belongs to the dCTP deaminase family. Archaeal dUTPase subfamily. In terms of assembly, homotrimer.

The enzyme catalyses dUTP + H2O = dUMP + diphosphate + H(+). It functions in the pathway pyrimidine metabolism; dUMP biosynthesis; dUMP from dCTP (dUTP route): step 2/2. Functionally, this enzyme is involved in nucleotide metabolism: it produces dUMP, the immediate precursor of thymidine nucleotides and it decreases the intracellular concentration of dUTP so that uracil cannot be incorporated into DNA. The protein is Deoxyuridine 5'-triphosphate nucleotidohydrolase of Methanocaldococcus jannaschii (strain ATCC 43067 / DSM 2661 / JAL-1 / JCM 10045 / NBRC 100440) (Methanococcus jannaschii).